Reading from the N-terminus, the 147-residue chain is MVHFTAEEKATIMSLWGKVNVEEAGGEALGRLLVVYPWTQRFFDNFGNLSSASAIMGNPKVKAHGKKVLTSFGDAVKNMDNLKGAFAKLSELHCDKLHVDPENFRLLGNVMVIILATHFGKEFTPDVQAAWQKLVSGVATALAHKYH.

A Globin domain is found at 3–147 (HFTAEEKATI…VATALAHKYH (145 aa)). A phosphoserine mark is found at Ser-14 and Ser-51. Heme b is bound by residues His-64 and His-93.

This sequence belongs to the globin family. Heterotetramer of two alpha chains and two epsilon chains in early embryonic hemoglobin Gower-2; two zeta chains and two epsilon chains in early embryonic hemoglobin Gower-1. In terms of tissue distribution, red blood cells.

In terms of biological role, the epsilon chain is a beta-type chain of early mammalian embryonic hemoglobin. In Daubentonia madagascariensis (Aye-aye), this protein is Hemoglobin subunit epsilon (HBE1).